Reading from the N-terminus, the 392-residue chain is Small ribosomal subunit protein bS1 (392 aa).

4 consecutive S1 motif domains span residues 16–90, 108–173, 194–262, and 279–348; these read GDKV…LSKR, DEVI…LSRK, GDVI…LSIK, and DDVI…LSIK. The interval 361-380 is disordered; that stretch reads ASTTQSYLEDDNDEDKPTLG.

The protein belongs to the bacterial ribosomal protein bS1 family.

Binds mRNA; thus facilitating recognition of the initiation point. It is needed to translate mRNA with a short Shine-Dalgarno (SD) purine-rich sequence. The sequence is that of Small ribosomal subunit protein bS1 (rpsA) from Staphylococcus epidermidis (strain ATCC 35984 / DSM 28319 / BCRC 17069 / CCUG 31568 / BM 3577 / RP62A).